The primary structure comprises 534 residues: GMP synthase [glutamine-hydrolyzing] (534 aa).

The Glutamine amidotransferase type-1 domain occupies 20–210 (MLIILDFGSQ…VYHICDCEPT (191 aa)). Catalysis depends on cysteine 97, which acts as the Nucleophile. Residues histidine 184 and glutamate 186 contribute to the active site. In terms of domain architecture, GMPS ATP-PPase spans 211-409 (WTTETFVEEA…LGLPEEIVKR (199 aa)). Residue 238 to 244 (SGGVDSS) participates in ATP binding.

As to quaternary structure, homodimer.

It catalyses the reaction XMP + L-glutamine + ATP + H2O = GMP + L-glutamate + AMP + diphosphate + 2 H(+). The protein operates within purine metabolism; GMP biosynthesis; GMP from XMP (L-Gln route): step 1/1. Catalyzes the synthesis of GMP from XMP. The chain is GMP synthase [glutamine-hydrolyzing] from Synechococcus sp. (strain ATCC 27144 / PCC 6301 / SAUG 1402/1) (Anacystis nidulans).